A 446-amino-acid chain; its full sequence is tRNA-2-methylthio-N(6)-dimethylallyladenosine synthase (446 aa).

Positions 3–124 constitute an MTTase N-terminal domain; that stretch reads KKLYIKTYGC…LPELISKVVR (122 aa). [4Fe-4S] cluster is bound by residues Cys-12, Cys-48, Cys-87, Cys-162, Cys-166, and Cys-169. The Radical SAM core domain occupies 148-380; the sequence is YPQGASSFIS…QKELAAQQLA (233 aa). A TRAM domain is found at 383-446; that stretch reads ESCIGSTMKV…LNSLSGEIYR (64 aa).

It belongs to the methylthiotransferase family. MiaB subfamily. In terms of assembly, monomer. The cofactor is [4Fe-4S] cluster.

The protein resides in the cytoplasm. The enzyme catalyses N(6)-dimethylallyladenosine(37) in tRNA + (sulfur carrier)-SH + AH2 + 2 S-adenosyl-L-methionine = 2-methylsulfanyl-N(6)-dimethylallyladenosine(37) in tRNA + (sulfur carrier)-H + 5'-deoxyadenosine + L-methionine + A + S-adenosyl-L-homocysteine + 2 H(+). In terms of biological role, catalyzes the methylthiolation of N6-(dimethylallyl)adenosine (i(6)A), leading to the formation of 2-methylthio-N6-(dimethylallyl)adenosine (ms(2)i(6)A) at position 37 in tRNAs that read codons beginning with uridine. The chain is tRNA-2-methylthio-N(6)-dimethylallyladenosine synthase from Rickettsia bellii (strain RML369-C).